Consider the following 637-residue polypeptide: Neutral ceramidase (637 aa).

Mg(2+) is bound at residue H34. Zn(2+)-binding residues include H96 and H204. S256 functions as the Nucleophile in the catalytic mechanism. Zn(2+) is bound by residues E417 and Y453. Mg(2+) is bound by residues D575, D577, and T580.

The protein belongs to the neutral ceramidase family. Zn(2+) is required as a cofactor. Requires Mg(2+) as cofactor.

It carries out the reaction an N-acylsphing-4-enine + H2O = sphing-4-enine + a fatty acid. It catalyses the reaction an N-acylsphinganine + H2O = sphinganine + a fatty acid. The enzyme catalyses an N-acyl-(4R)-4-hydroxysphinganine + H2O = (4R)-hydroxysphinganine + a fatty acid. The catalysed reaction is N-(9Z-octadecenoyl)-sphing-4-enine + H2O = sphing-4-enine + (9Z)-octadecenoate. It carries out the reaction N-(hexanoyl)sphing-4-enine + H2O = hexanoate + sphing-4-enine. It catalyses the reaction N-hexadecanoylsphing-4-enine + H2O = sphing-4-enine + hexadecanoate. The enzyme catalyses N-octadecanoylsphing-4-enine + H2O = sphing-4-enine + octadecanoate. The catalysed reaction is N-eicosanoyl-sphing-4-enine + H2O = eicosanoate + sphing-4-enine. It carries out the reaction N-(15Z-tetracosenoyl)-sphing-4-enine + H2O = (15Z)-tetracosenoate + sphing-4-enine. It catalyses the reaction N-tetracosanoyl-sphing-4-enine + H2O = tetracosanoate + sphing-4-enine. Its activity is regulated as follows. 90% of activity is inhibited by nickel, zinc and calcium ions. Magnesium, cobalt, copper and manganese ions inhibit between 50 and 80% of activity. Its function is as follows. Catalyzes the cleavage of the N-acyl linkage of the ceramides (Cers) to yield sphingosine (Sph) and free fatty acid. Also catalyzes the synthesis of Cers from Sph and fatty acid. Cers containning C6-C24 fatty acids are well hydrolyzed, and Cers with mono unsaturated fatty acids are much more hydrolyzed than those with saturated fatty acids. The polypeptide is Neutral ceramidase (Mycobacterium tuberculosis (strain ATCC 25618 / H37Rv)).